A 29-amino-acid chain; its full sequence is Cytochrome b6-f complex subunit 8 (29 aa).

Residues 3-23 form a helical membrane-spanning segment; that stretch reads IVSLAWAVLMVVFTFSLSLVV.

It belongs to the PetN family. The 4 large subunits of the cytochrome b6-f complex are cytochrome b6, subunit IV (17 kDa polypeptide, PetD), cytochrome f and the Rieske protein, while the 4 small subunits are PetG, PetL, PetM and PetN. The complex functions as a dimer.

The protein localises to the plastid. The protein resides in the chloroplast thylakoid membrane. Component of the cytochrome b6-f complex, which mediates electron transfer between photosystem II (PSII) and photosystem I (PSI), cyclic electron flow around PSI, and state transitions. The polypeptide is Cytochrome b6-f complex subunit 8 (Drimys granadensis).